The primary structure comprises 963 residues: Collagen alpha-1(I) chain (963 aa).

The interval 1–963 is disordered; the sequence is GPMGPSGPRG…PGPPGPPGPP (963 aa). The segment covering 40–54 has biased composition (basic and acidic residues); sequence NGDDGEAGKPGRPGE. Serine 82 carries the phosphoserine modification. Composition is skewed to low complexity over residues 90 to 106 and 129 to 142; these read DAGP…PGEN and PAGA…TGAA. A compositionally biased stretch (pro residues) spans 144-156; that stretch reads PPGPTGPAGPPGF. Residues 190-229 are compositionally biased toward low complexity; that stretch reads AGAAGPAGNPGADGQPGAKGANGAPGIAGAPGFPGARGPS. The span at 296-305 shows a compositional bias: gly residues; the sequence is GERGGPGARG. 6 stretches are compositionally biased toward low complexity: residues 313–337, 349–375, 384–403, 482–495, 555–569, and 582–609; these read AGPK…PGEA, KGIT…QDGR, ARGQ…AGEP, PRGA…DGAK, SGPS…ARGA, and AGFA…KGDA. Serine 558 is modified (phosphoserine). Positions 611–623 are enriched in pro residues; that stretch reads PPGPAGPTGPPGP. 3 stretches are compositionally biased toward low complexity: residues 638–654, 683–692, and 702–726; these read SAGP…AGRV, ETGPAGRPGE, and AGEK…QGIA. Pro residues-rich tracts occupy residues 767 to 777 and 813 to 828; these read PPGPVGPPGIA and AGPP…PGPV. The segment covering 849–863 has biased composition (low complexity); sequence IGPVGARGPAGPQGP. The segment covering 864-878 has biased composition (basic and acidic residues); sequence RGDKGETGEQGDRGI. A compositionally biased stretch (low complexity) spans 897–930; the sequence is PGEQGPSGASGPAGPRGPPGSAGAPGKDGINGIP. Pro residues predominate over residues 948–963; sequence VGPPGPPGPPGPPGPP.

This sequence belongs to the fibrillar collagen family. Trimers of one alpha 2(I) and two alpha 1(I) chains. Prolines at the third position of the tripeptide repeating unit (G-X-Y) are hydroxylated in some or all of the chains. As to expression, forms the fibrils of tendon, ligaments and bones. In bones, the fibrils are mineralized with calcium hydroxyapatite.

It localises to the secreted. Its subcellular location is the extracellular space. The protein resides in the extracellular matrix. Its function is as follows. Type I collagen is a member of group I collagen (fibrillar forming collagen). The protein is Collagen alpha-1(I) chain of Tapirus terrestris (Lowland tapir).